The primary structure comprises 568 residues: Proline--tRNA ligase (568 aa).

The protein belongs to the class-II aminoacyl-tRNA synthetase family. ProS type 1 subfamily. Homodimer.

The protein resides in the cytoplasm. It carries out the reaction tRNA(Pro) + L-proline + ATP = L-prolyl-tRNA(Pro) + AMP + diphosphate. Catalyzes the attachment of proline to tRNA(Pro) in a two-step reaction: proline is first activated by ATP to form Pro-AMP and then transferred to the acceptor end of tRNA(Pro). As ProRS can inadvertently accommodate and process non-cognate amino acids such as alanine and cysteine, to avoid such errors it has two additional distinct editing activities against alanine. One activity is designated as 'pretransfer' editing and involves the tRNA(Pro)-independent hydrolysis of activated Ala-AMP. The other activity is designated 'posttransfer' editing and involves deacylation of mischarged Ala-tRNA(Pro). The misacylated Cys-tRNA(Pro) is not edited by ProRS. In Chromobacterium violaceum (strain ATCC 12472 / DSM 30191 / JCM 1249 / CCUG 213 / NBRC 12614 / NCIMB 9131 / NCTC 9757 / MK), this protein is Proline--tRNA ligase.